The following is a 231-amino-acid chain: MSTAPLYTVVVPAAGIGQRMQADRPKQYLTIAGKTILEHTLENLYAHPQIEQIIVAINPLDQYFDSLPIASKTWVKRVDGGGERADSVLAGLNSLQNADWVLVHDAARPCLAQDDLSKLLATAEHSEHGAILACRVRDTMKRGNSSHDILHTESRDNLWHALTPQFFPLDALRSALGQAMAQGIEITDEASAIEWVQGKVHLVEGRSSNIKVTQPEDLHLAEFYLQHKATL.

This sequence belongs to the IspD/TarI cytidylyltransferase family. IspD subfamily.

It carries out the reaction 2-C-methyl-D-erythritol 4-phosphate + CTP + H(+) = 4-CDP-2-C-methyl-D-erythritol + diphosphate. It participates in isoprenoid biosynthesis; isopentenyl diphosphate biosynthesis via DXP pathway; isopentenyl diphosphate from 1-deoxy-D-xylulose 5-phosphate: step 2/6. In terms of biological role, catalyzes the formation of 4-diphosphocytidyl-2-C-methyl-D-erythritol from CTP and 2-C-methyl-D-erythritol 4-phosphate (MEP). In Pseudoalteromonas atlantica (strain T6c / ATCC BAA-1087), this protein is 2-C-methyl-D-erythritol 4-phosphate cytidylyltransferase.